A 971-amino-acid polypeptide reads, in one-letter code: Endoplasmic reticulum calcium ATPase srcA (971 aa).

Topologically, residues 1–25 (MNNEALAEDPPTPLWELVLEQFKDQ) are cytoplasmic. The chain crosses the membrane as a helical span at residues 26–46 (LVLILLGSAAVSFVLALFEEG). Topologically, residues 47–49 (DDW) are lumenal. Residues 50–70 (TAFVDPVVILTILILNAVVGV) traverse the membrane as a helical segment. The Cytoplasmic segment spans residues 71-217 (TQESSAEKAI…PTPLKQKLND (147 aa)). A helical membrane pass occupies residues 218–238 (FGDMLAKVITVICVLVWLINV). Residues 239-262 (EHFNDPAHGGWAKGAIYYLKIAVS) lie on the Lumenal side of the membrane. Residues 263–283 (LGVAAIPEGLAVVITTCLALG) traverse the membrane as a helical segment. Ca(2+)-binding residues include Val265, Ala266, Ile268, and Glu270. Over 284–718 (TRKMAAKNAV…GRSIYSNTQQ (435 aa)) the chain is Cytoplasmic. Asp312 serves as the catalytic 4-aspartylphosphate intermediate. The Mg(2+) site is built by Asp312 and Thr314. ATP contacts are provided by Thr314, Glu402, Arg453, Lys473, Arg518, Arg637, and Lys643. Mg(2+) is bound at residue Asp662. Asn665 contributes to the ATP binding site. The helical transmembrane segment at 719–741 (FIRYLISSNIGEVVSIFLTAALG) threads the bilayer. Ca(2+)-binding residues include Asn727 and Glu730. The Lumenal segment spans residues 742 to 750 (MPEALIPVQ). A helical transmembrane segment spans residues 751-770 (LLWVNLVTDGLPATALSFNP). Residues Asn755, Thr758, and Asp759 each coordinate Ca(2+). The Cytoplasmic portion of the chain corresponds to 771 to 795 (PDHDVMRRAPRKRDEPLVGGWLLFR). The helical transmembrane segment at 796–816 (YLAIGTYVGAATVFGYIWWFV) threads the bilayer. Residues 817–854 (YNPEGPQISFWQLSHFHKCSAQFPEIGCEMFSNEMSRS) are Lumenal-facing. Residues 855–875 (ASTVSLSILVVIEMLNAMNAL) form a helical membrane-spanning segment. Glu867 contributes to the Ca(2+) binding site. Residues 876–891 (SSSESLLAFPLWNNMM) are Cytoplasmic-facing. The chain crosses the membrane as a helical span at residues 892–912 (LVYAIILSMTLHFAILYIPFL). Residues 913 to 917 (QTLFS) lie on the Lumenal side of the membrane. The helical transmembrane segment at 918–938 (ILPLNWTEWKAVLAISAPVVA) threads the bilayer. At 939–971 (IDELLKYAERRLYTLPAIAGEQQNGVAFKPKKA) the chain is on the cytoplasmic side.

The protein belongs to the cation transport ATPase (P-type) (TC 3.A.3) family. Mg(2+) serves as cofactor.

The protein resides in the endoplasmic reticulum membrane. It catalyses the reaction Ca(2+)(in) + ATP + H2O = Ca(2+)(out) + ADP + phosphate + H(+). Functionally, magnesium-dependent enzyme catalyzes the hydrolysis of ATP coupled with the translocation of calcium from the cytosol to the endoplasmic reticulum lumen. Its activity is coupled to the unfolded protein response (UPR) and Ca(2+) import into the endoplasmioc reticulum is important for redox homeostasis, virulence, cell wall biosynthesis, and resistance to antifungal compounds that inhibit Ca2+ signaling. With pmrA, promotes radial growth and conidiation. This chain is Endoplasmic reticulum calcium ATPase srcA (srcA), found in Aspergillus fumigatus (strain ATCC MYA-4609 / CBS 101355 / FGSC A1100 / Af293) (Neosartorya fumigata).